Reading from the N-terminus, the 482-residue chain is MFS-type transporter traF (482 aa).

The segment covering 1–14 (MTSGTEQATLNTEE) has biased composition (polar residues). The segment at 1 to 22 (MTSGTEQATLNTEENGSDSDHL) is disordered. 2 N-linked (GlcNAc...) asparagine glycosylation sites follow: N15 and N45. The next 9 helical transmembrane spans lie at 52–72 (VFITACLASLVCISTFGSSVM), 89–109 (LSILATALYVLGFAVGPLLFG), 125–145 (VFLFAIFSIPIAVAKNVATIF), 149–169 (FLCGTFAAAPLAIAGGGLADL), 176–196 (GIAVAGFASATFLGPVLGPLV), 209–229 (WTQWLSIIFSLVFLAIYFVFC), 275–295 (PILALLTLYMGFIYGFLYLCF), 312–332 (IGSLPFLSITVGVLIGVVIII), and 354–374 (LVPMMIGSILMPAGIFWFAWT). N-linked (GlcNAc...) asparagine glycosylation is present at N376. 3 helical membrane-spanning segments follow: residues 379-399 (LPWAPQVVSGVFIGCGILLIF), 427-447 (LLGAGFPLFASYMFDNLGVPW), and 448-468 (AMSLLGFLCVALVPVPFLFFI).

The protein belongs to the major facilitator superfamily. CAR1 family.

The protein resides in the membrane. MFS-type transporter; part of the tra gene cluster that produces terrestric acid. The clavatol biosynthesis cluster cla and the terrestric acid cluster tra are both involved in the production of peniphenones and penilactones. The polypeptide is MFS-type transporter traF (Penicillium crustosum (Blue mold fungus)).